A 226-amino-acid polypeptide reads, in one-letter code: ATP-dependent dethiobiotin synthetase BioD (226 aa).

13–18 is a binding site for ATP; that stretch reads DVGKTL. Thr17 serves as a coordination point for Mg(2+). Lys38 is a catalytic residue. ATP-binding positions include Asp55, 117 to 120, 177 to 178, 206 to 208, and Glu213; these read EGAG, NR, and PFV. Mg(2+) contacts are provided by Asp55 and Glu117.

This sequence belongs to the dethiobiotin synthetase family. In terms of assembly, homodimer. Mg(2+) is required as a cofactor.

The protein resides in the cytoplasm. It catalyses the reaction (7R,8S)-7,8-diammoniononanoate + CO2 + ATP = (4R,5S)-dethiobiotin + ADP + phosphate + 3 H(+). Its pathway is cofactor biosynthesis; biotin biosynthesis; biotin from 7,8-diaminononanoate: step 1/2. In terms of biological role, catalyzes a mechanistically unusual reaction, the ATP-dependent insertion of CO2 between the N7 and N8 nitrogen atoms of 7,8-diaminopelargonic acid (DAPA, also called 7,8-diammoniononanoate) to form a ureido ring. The protein is ATP-dependent dethiobiotin synthetase BioD of Aeromonas hydrophila subsp. hydrophila (strain ATCC 7966 / DSM 30187 / BCRC 13018 / CCUG 14551 / JCM 1027 / KCTC 2358 / NCIMB 9240 / NCTC 8049).